The primary structure comprises 695 residues: Transketolase (695 aa).

His-37 lines the substrate pocket. Residues His-77 and 126–128 (GPL) contribute to the thiamine diphosphate site. Asp-164 serves as a coordination point for Mg(2+). Thiamine diphosphate contacts are provided by Gly-165 and Asn-194. 2 residues coordinate Mg(2+): Asn-194 and Ile-196. 3 residues coordinate substrate: His-268, Arg-361, and Ser-388. His-268 contacts thiamine diphosphate. Catalysis depends on Glu-415, which acts as the Proton donor. Phe-441 lines the thiamine diphosphate pocket. Residues His-465, Asp-473, and Arg-524 each coordinate substrate.

Belongs to the transketolase family. As to quaternary structure, homodimer. The cofactor is Mg(2+). Ca(2+) is required as a cofactor. Requires Mn(2+) as cofactor. Co(2+) serves as cofactor. It depends on thiamine diphosphate as a cofactor.

It catalyses the reaction D-sedoheptulose 7-phosphate + D-glyceraldehyde 3-phosphate = aldehydo-D-ribose 5-phosphate + D-xylulose 5-phosphate. The protein operates within carbohydrate biosynthesis; Calvin cycle. Its function is as follows. Catalyzes the transfer of a two-carbon ketol group from a ketose donor to an aldose acceptor, via a covalent intermediate with the cofactor thiamine pyrophosphate. The polypeptide is Transketolase (cbbT) (Sinorhizobium medicae (strain WSM419) (Ensifer medicae)).